A 156-amino-acid polypeptide reads, in one-letter code: Snaclec A11 (156 aa).

The signal sequence occupies residues 1-23 (MGRSISVSFGLLVVFLSLSGTGA). Disulfide bonds link cysteine 27-cysteine 38, cysteine 55-cysteine 154, and cysteine 129-cysteine 146. One can recognise a C-type lectin domain in the interval 34–155 (YDQHCYQAVD…CGQPYRFTCE (122 aa)).

The protein belongs to the snaclec family. In terms of assembly, heterodimer; disulfide-linked. In terms of tissue distribution, expressed by the venom gland.

The protein resides in the secreted. Functionally, interferes with one step of hemostasis (modulation of platelet aggregation, or coagulation cascade, for example). The protein is Snaclec A11 of Macrovipera lebetinus (Levantine viper).